Here is a 310-residue protein sequence, read N- to C-terminus: p-hydroxybenzoic acid efflux pump subunit AaeA (310 aa).

A helical transmembrane segment spans residues 12 to 32 (AITLVLVILAFIAIFRAWVYY).

It belongs to the membrane fusion protein (MFP) (TC 8.A.1) family.

Its subcellular location is the cell inner membrane. Functionally, forms an efflux pump with AaeB. This is p-hydroxybenzoic acid efflux pump subunit AaeA from Salmonella schwarzengrund (strain CVM19633).